A 131-amino-acid chain; its full sequence is Hyastatin (131 aa).

A signal peptide spans 1–16 (MRVLLILVSLAALAHA). 3 disulfides stabilise this stretch: cysteine 103–cysteine 117, cysteine 107–cysteine 124, and cysteine 118–cysteine 125. Residue lysine 130 is modified to Lysine amide.

As to expression, strongly expressed in hemocytes, with weaker expression in gills and epidermis. Expressed at low levels in hepatopancreas.

The protein resides in the cytoplasmic granule. Antimicrobial peptide. Has strong antibacterial activity against the Gram-positive bacterium C.glutamicum (MIC=0.4 uM) and the Gram-negative bacterium E.coli (MIC=12.5 uM). Has weak antibacterial activity against the Gram-positive bacterium S.aureus (MIC&gt;50 uM) and the Gram-negative bacterium P.aeruginosa (MIC&gt;50 uM). Has antifungal activity against S.cerevisiae (MIC=12.5) and C.albicans (MIC=6.3 uM). Has weak antifungal activity against the mold B.cinerea. Presents chitin-binding activity. This Hyas araneus (Atlantic lyre crab) protein is Hyastatin.